We begin with the raw amino-acid sequence, 1131 residues long: Protein DWARF 53 (1131 aa).

The region spanning 8–181 (ARQCLSPAAV…KLAILRPAPP (174 aa)) is the Clp R domain. 2 repeat regions span residues 12-85 (LSPA…LDRL) and 103-181 (VSNS…PAPP). The segment at 511-574 (NRDPYKPFPR…ISSPSVTNKR (64 aa)) is disordered. Positions 558–569 (SSSTARPISSPS) are enriched in low complexity. The short motif at 578 to 582 (LVLNL) is the EAR 1 element. Residues 588–655 (KSDENLQERG…KRVEDSERSV (68 aa)) are disordered. Polar residues predominate over residues 597–609 (GMQSQHGTLSNVD). Residues 646–655 (KRVEDSERSV) show a composition bias toward basic and acidic residues. The short motif at 799-803 (LDLNL) is the EAR 2 element. Disordered stretches follow at residues 951-970 (ISDDQEKLQESPSSSKRLHR) and 976-1002 (FDLNLPVDEDEPLDADDDSSSHENSYG). Positions 976–981 (FDLNLP) match the EAR 3 motif. Residues 982–993 (VDEDEPLDADDD) are compositionally biased toward acidic residues.

It belongs to the ClpA/ClpB family. Interacts with D3. Interacts with D14. The interaction with D14 is enhanced in the presence of strigolactones. The interaction with D14 occurs in the presence of (2'R) stereoisomers of strigolactones, but not (2'S) stereoisomers. Interacts with the TOPLESS-related proteins TPR1, TPR2 and TPR3. Interacts with SPL14/IPA1. Post-translationally, polyubiquitinated. Strigolactone, but not karrikin, triggers rapid SCF(D3)-dependent degradation via the proteasome. Expressed in the shoot bases of seedlings, young leaves, axillary buds and young panicles. Expressed in young roots vasculature, culms, internodes and nodes, preferentially in the parenchyma cells surrounding the xylem.

The protein resides in the nucleus. Its function is as follows. Repressor of strigolactones (SL) signaling. Subjected to a negative feedback control of SL signaling. Suppresses the transcriptional activation activity of SPL14/IPA1 in SL signaling. Acts with SPL14/IPA1 to mediate the SL-regulated tiller development. Subject to a negative feedback regulation by SPL14/IPA1, which binds to D53 promoter to repress D53 gene expression. The sequence is that of Protein DWARF 53 from Oryza sativa subsp. japonica (Rice).